The primary structure comprises 2389 residues: Highly reducing polyketide synthase Dhc3 (2389 aa).

The Ketosynthase family 3 (KS3) domain maps to 9 to 433 (DVPIAVVGLA…GTNGHAVLES (425 aa)). Residues cysteine 181, histidine 316, and histidine 356 each act as for beta-ketoacyl synthase activity in the active site. The segment at 551-861 (FVFTGQGAQW…LSGPVEQILN (311 aa)) is malonyl-CoA:ACP transacylase (MAT) domain. Serine 641 acts as the For malonyltransferase activity in catalysis. The interval 944 to 1079 (RSLIGAQVPM…GLITIDYADT (136 aa)) is N-terminal hotdog fold. Residues 944-1263 (RSLIGAQVPM…VSELENDTEA (320 aa)) enclose the PKS/mFAS DH domain. The dehydratase (DH) domain stretch occupies residues 946 to 1262 (LIGAQVPMMD…RVSELENDTE (317 aa)). The Proton acceptor; for dehydratase activity role is filled by histidine 976. A C-terminal hotdog fold region spans residues 1107 to 1263 (PDICSKEDFY…VSELENDTEA (157 aa)). Aspartate 1173 (proton donor; for dehydratase activity) is an active-site residue. The interval 1673–1987 (GLLDTLAFIE…QGKHRGKLVL (315 aa)) is enoylreductase (ER) domain. The segment at 2011–2191 (ATYLFVGGLG…VAVDLGIMRD (181 aa)) is catalytic ketoreductase (KRc) domain. Residues 2302 to 2379 (EAVSIITDAL…EFAEKIAEKS (78 aa)) enclose the Carrier domain. Position 2339 is an O-(pantetheine 4'-phosphoryl)serine (serine 2339).

The protein operates within mycotoxin biosynthesis. Highly reducing polyketide synthase; part of the gene cluster that mediates the biosynthesis of 10,11-dehydrocurvularin, a prevalent fungal phytotoxin with heat shock response and immune-modulatory activities. The highly reducing polyketide synthase Dhc3 is responsible for biosynthesis up to the tetraketide stage. The non-reducing polyketide synthase Dhc5 then conducts four additional chain extension cycles, producing the unreduced part of the nascent octaketide from C-1 to C-8 in 10,11-dehydrocurvularin. This Alternaria cinerariae protein is Highly reducing polyketide synthase Dhc3 (Dhc3).